Reading from the N-terminus, the 228-residue chain is N-acylneuraminate cytidylyltransferase (228 aa).

It belongs to the CMP-NeuNAc synthase family.

It is found in the cytoplasm. It catalyses the reaction an N-acylneuraminate + CTP = a CMP-N-acyl-beta-neuraminate + diphosphate. This Neisseria meningitidis serogroup B (strain ATCC BAA-335 / MC58) protein is N-acylneuraminate cytidylyltransferase (neuA).